The chain runs to 180 residues: Adenine phosphoribosyltransferase (180 aa).

At Ser-2 the chain carries N-acetylserine. 3 positions are modified to phosphoserine: Ser-4, Ser-15, and Ser-30. Residue Tyr-60 is modified to Phosphotyrosine. Residue Ser-66 is modified to Phosphoserine. Lys-114 is modified (N6-acetyllysine). Thr-135 carries the phosphothreonine modification.

This sequence belongs to the purine/pyrimidine phosphoribosyltransferase family. Homodimer.

The protein resides in the cytoplasm. It catalyses the reaction AMP + diphosphate = 5-phospho-alpha-D-ribose 1-diphosphate + adenine. The protein operates within purine metabolism; AMP biosynthesis via salvage pathway; AMP from adenine: step 1/1. In terms of biological role, catalyzes a salvage reaction resulting in the formation of AMP, that is energically less costly than de novo synthesis. In Mus pahari (Gairdner's shrew-mouse), this protein is Adenine phosphoribosyltransferase.